Here is a 303-residue protein sequence, read N- to C-terminus: Acetylglutamate kinase (303 aa).

Substrate-binding positions include 67–68 (GG), R89, and N193.

The protein belongs to the acetylglutamate kinase family. ArgB subfamily.

The protein resides in the cytoplasm. It carries out the reaction N-acetyl-L-glutamate + ATP = N-acetyl-L-glutamyl 5-phosphate + ADP. Its pathway is amino-acid biosynthesis; L-arginine biosynthesis; N(2)-acetyl-L-ornithine from L-glutamate: step 2/4. Its function is as follows. Catalyzes the ATP-dependent phosphorylation of N-acetyl-L-glutamate. This Acinetobacter baylyi (strain ATCC 33305 / BD413 / ADP1) protein is Acetylglutamate kinase.